The primary structure comprises 178 residues: UPF0302 protein BcerKBAB4_1445 (178 aa).

It belongs to the UPF0302 family.

The chain is UPF0302 protein BcerKBAB4_1445 from Bacillus mycoides (strain KBAB4) (Bacillus weihenstephanensis).